A 436-amino-acid chain; its full sequence is METTLGSYARTLSLGMLVPSAICLLAGTFGLLGGSSIALWVVIAVSLLGVVGGVKIGGSARRMAGDLSTAIHVLSRSASGDLNARILDVRGSGGIGALQHSINRLLDLAEAFGKEAFAAVESANHGRYYRRIITTGLRGDFVLYAKTINQALKRMEARDAEFIAFANNQVKPVVNAVAAAATELEASSGAMSAQSTDTSHQAMTVAAAAEQASVNVQAVASAVEEFSASIKEISTQVHRAAAVASEAAGVASRTDTTVHGLSDAAQRIGAIVSLINDIAAQTNLLALNATIEAARAGDAGKGFAVVANEVKNLANQTARATEDITSQVAHIQEVAAEAIKAIQEITRTVSQIEETSSAVAGAVEEQNAVTVEIARNVAEAATGTSSVSSAIITVQATAAEATESAGQVADAASELSRQSENLSREVDGFIARIGGR.

Topologically, residues 1-8 are cytoplasmic; sequence METTLGSY. The chain crosses the membrane as a helical span at residues 9-29; it reads ARTLSLGMLVPSAICLLAGTF. Glycine 30 is a topological domain (periplasmic). Residues 31-51 traverse the membrane as a helical segment; the sequence is LLGGSSIALWVVIAVSLLGVV. Topologically, residues 52 to 436 are cytoplasmic; it reads GGVKIGGSAR…DGFIARIGGR (385 aa). One can recognise a Methyl-accepting transducer domain in the interval 180–416; the sequence is AATELEASSG…QVADAASELS (237 aa). A Glutamate methyl ester (Gln) modification is found at glutamine 211. Glutamate 225 is modified (glutamate methyl ester (Glu)). Positions 321–436 are required for interaction with MamK and to respond to the magnetic field; that stretch reads TEDITSQVAH…DGFIARIGGR (116 aa).

The protein belongs to the methyl-accepting chemotaxis (MCP) protein family. In terms of assembly, interacts with MamK at cell poles and septa.

It is found in the cell inner membrane. Probable methyl-accepting taxis protein. May be the receptor that senses the torque generated from the interaction between the magnetosome dipole moment and the external magnetic field. Overproduction interferes with magnetotaxis, cells respond more slowly to changes in the magnetic field; requires the MamK-interacting C-terminus of the protein. The effect of magnetic sensing is to control flagellar rotation. Functionally, chemotactic-signal transducers respond to changes in the concentration of attractants and repellents in the environment, transduce a signal from the outside to the inside of the cell, and facilitate sensory adaptation through variation of methylation levels. Attractants increase the level of methylation while repellents decrease the level of methylation. This is Methyl-accepting chemotaxis protein Amb0994 from Paramagnetospirillum magneticum (strain ATCC 700264 / AMB-1) (Magnetospirillum magneticum).